We begin with the raw amino-acid sequence, 100 residues long: Small ribosomal subunit protein uS14c (100 aa).

The protein belongs to the universal ribosomal protein uS14 family. Part of the 30S ribosomal subunit.

The protein localises to the plastid. It is found in the chloroplast. In terms of biological role, binds 16S rRNA, required for the assembly of 30S particles. The protein is Small ribosomal subunit protein uS14c of Nasturtium officinale (Watercress).